The sequence spans 88 residues: Sec-independent protein translocase protein TatA (88 aa).

A helical transmembrane segment spans residues L4–G24. The segment at A45–P88 is disordered. A compositionally biased stretch (low complexity) spans S75–P88.

It belongs to the TatA/E family. As to quaternary structure, the Tat system comprises two distinct complexes: a TatABC complex, containing multiple copies of TatA, TatB and TatC subunits, and a separate TatA complex, containing only TatA subunits. Substrates initially bind to the TatABC complex, which probably triggers association of the separate TatA complex to form the active translocon.

The protein resides in the cell inner membrane. Its function is as follows. Part of the twin-arginine translocation (Tat) system that transports large folded proteins containing a characteristic twin-arginine motif in their signal peptide across membranes. TatA could form the protein-conducting channel of the Tat system. In Gluconacetobacter diazotrophicus (strain ATCC 49037 / DSM 5601 / CCUG 37298 / CIP 103539 / LMG 7603 / PAl5), this protein is Sec-independent protein translocase protein TatA.